Consider the following 346-residue polypeptide: MASGVGAACEELPPDGTCDECEPDEAPGAEEVCRDCGFCYCRRHADAHRQKFLSHRLAAYVHGAQAWTPPASGGDDALPEDAEAKGEAEGEVESEVGEEESETEVDSESEEESETEEDSEDESDEESEEDSEEEMEDEQESEAEEDNQEEGESEAEGETEAESEFDPEIEMEAERVAKRKCPDHGLDLSTYCQEDRQLICVLCPVIGAHRGHQLSTLDEAFEELRSKDSGGLKAAMIELVERLKFKSSDPKVTRDQMKIFIQQEFKKVQKVIADEEQKALHLVDIQEAMATAHVTEILADIQSHMDRLMTQMAQAKEQLDTSNESAEPKAEGDEEGPSGASEEEDT.

The tract at residues 68-167 (TPPASGGDDA…ETEAESEFDP (100 aa)) is disordered. The segment covering 89-167 (EGEVESEVGE…ETEAESEFDP (79 aa)) has biased composition (acidic residues). The B box-type zinc-finger motif lies at 176–217 (VAKRKCPDHGLDLSTYCQEDRQLICVLCPVIGAHRGHQLSTL). Residues Cys-181, His-184, Cys-203, and His-209 each coordinate Zn(2+). Residues 292–327 (AHVTEILADIQSHMDRLMTQMAQAKEQLDTSNESAE) are a coiled coil. The interval 313–346 (AQAKEQLDTSNESAEPKAEGDEEGPSGASEEEDT) is disordered. Positions 332–346 (GDEEGPSGASEEEDT) are enriched in acidic residues. 2 positions are modified to phosphoserine: Ser-338 and Ser-341.

As to quaternary structure, interacts (via coiled coil) with TRIM17 (via coiled coil). Expressed mainly in brain with high level in cerebral hemispheres and cerebellum. Lower expression in kidney, lung and spleen. In brain is detected in the hippocampus, thalamic and pretectal nuclei, substantia nigra, the dorsal part of the medulla, the cerebellum, in the olfactory nucleus, other cortical areas apart from hippocampus and the striatum. Indeed expression is confined in neuronal somata namely in the CA3 region and dentate gyrus of the hippocampus, caudate-putamen, parabranchial nucleus, olfactory nucleus, cortex, deep cerebellar nuclei and thalamus. Also highly expressed in the spleen. thymus and testis.

Its function is as follows. May play a role in the process of differentiation and maturation of neuronal cells. May regulate the activity of TRIM17. Is a negative regulator of PAX6 expression. This Mus musculus (Mouse) protein is Tripartite motif-containing protein 44 (Trim44).